Reading from the N-terminus, the 506-residue chain is Histidine ammonia-lyase (506 aa).

Positions 143 to 145 (ASG) form a cross-link, 5-imidazolinone (Ala-Gly). Residue S144 is modified to 2,3-didehydroalanine (Ser).

It belongs to the PAL/histidase family. In terms of processing, contains an active site 4-methylidene-imidazol-5-one (MIO), which is formed autocatalytically by cyclization and dehydration of residues Ala-Ser-Gly.

Its subcellular location is the cytoplasm. The catalysed reaction is L-histidine = trans-urocanate + NH4(+). Its pathway is amino-acid degradation; L-histidine degradation into L-glutamate; N-formimidoyl-L-glutamate from L-histidine: step 1/3. The chain is Histidine ammonia-lyase from Salmonella paratyphi B (strain ATCC BAA-1250 / SPB7).